A 219-amino-acid polypeptide reads, in one-letter code: 7-cyano-7-deazaguanine synthase (219 aa).

F10–L20 serves as a coordination point for ATP. The Zn(2+) site is built by C187, C196, C199, and C202.

Belongs to the QueC family. In terms of assembly, homodimer. The cofactor is Zn(2+).

The enzyme catalyses 7-carboxy-7-deazaguanine + NH4(+) + ATP = 7-cyano-7-deazaguanine + ADP + phosphate + H2O + H(+). It participates in purine metabolism; 7-cyano-7-deazaguanine biosynthesis. Functionally, catalyzes the ATP-dependent conversion of 7-carboxy-7-deazaguanine (CDG) to 7-cyano-7-deazaguanine (preQ(0)). The sequence is that of 7-cyano-7-deazaguanine synthase from Lysinibacillus sphaericus (strain C3-41).